We begin with the raw amino-acid sequence, 396 residues long: Pinosylvin synthase 2 (396 aa).

Residue 60 to 63 coordinates substrate; sequence KFKR. Residue cysteine 170 is part of the active site. Residues leucine 273 and 311 to 313 contribute to the substrate site; that span reads GGR.

Belongs to the thiolase-like superfamily. Chalcone/stilbene synthases family. Homodimer.

The protein resides in the cytoplasm. The catalysed reaction is (E)-cinnamoyl-CoA + 3 malonyl-CoA + 3 H(+) = (E)-pinosylvin + 4 CO2 + 4 CoA. It carries out the reaction 3-phenylpropanoyl-CoA + 3 malonyl-CoA + 3 H(+) = dihydropinosylvin + 4 CO2 + 4 CoA. The protein operates within phytoalexin biosynthesis; pinosylvin biosynthesis. Functionally, catalyzes the production of pinosylvin from cinnamoyl-CoA and malonyl-CoA, and dihydropinosylvin from dihydrocinnamoyl-CoA. The polypeptide is Pinosylvin synthase 2 (Pinus strobus (Eastern white pine)).